Here is a 300-residue protein sequence, read N- to C-terminus: Protein CANDIDATE G-PROTEIN COUPLED RECEPTOR 2 (300 aa).

A run of 7 helical transmembrane segments spans residues 37 to 57 (GFLHNTVLVLASILFVAYLAY), 73 to 93 (IMIAYYGFLWLVSLLNLAWCC), 110 to 130 (LTLFTTSGMLFLEVSLVAFLF), 152 to 172 (IGLDLLLKAIYLFGFGVPLFI), 183 to 203 (WGLWVIHKLLLAGIYGMIFFM), 222 to 242 (ITVMLALNGLSLFACALTANG), and 245 to 265 (FGLWLYGITSVCYHAFYLPLL).

Belongs to the UPF0359 family. Interacts with GPA1. As to expression, expressed at low levels in seedlings.

The protein resides in the cell membrane. Plays a role in plants and microbes interactions. G-protein coupled melatonin receptor involved in root growth mediated by the bacterial quorum-sensing signals N-acyl-homoserine lactones (AHLs). Binds to melatonin. Phytomelatonin receptor required, in collaboration with GPA1, for melatonin-mediated stomatal closure involving H(2)O(2) and Ca(2+) signals. Essential for melatonin-mediated plant response to osmotic stress probably by activating reactive oxygen species (ROS) scavenging ability. This chain is Protein CANDIDATE G-PROTEIN COUPLED RECEPTOR 2, found in Arabidopsis thaliana (Mouse-ear cress).